We begin with the raw amino-acid sequence, 195 residues long: Myosin regulatory light chain, striated muscle, 25 kDa isoform (195 aa).

Basic and acidic residues predominate over residues 1–17 (AKDKEKKEKKDKKKDDA). Positions 1–39 (AKDKEKKEKKDKKKDDAPAEEAPAAAAAPAEEAAPTPSA) are disordered. Residues 20 to 39 (EEAPAAAAAPAEEAAPTPSA) show a composition bias toward low complexity. EF-hand domains lie at 55–90 (NQIQEFKEAFTMIDQDRDGIIGPDDLGNIFQQIGRE) and 124–159 (DTEGTLRDAFALFDEDKLGYLLEEYVKDLLTNVGDQ). Residues D68, D70, D72, and D79 each contribute to the Ca(2+) site.

As to quaternary structure, myosin is a hexamer of 2 heavy chains and 4 light chains.

Its function is as follows. Plays an important role in regulation of muscle cell contractile activity. The sequence is that of Myosin regulatory light chain, striated muscle, 25 kDa isoform from Lumbricus terrestris (Common earthworm).